Reading from the N-terminus, the 362-residue chain is Erythritol/L-threitol dehydrogenase (362 aa).

Positions 45, 76, 77, 109, 112, 115, and 123 each coordinate Zn(2+). Residues isoleucine 195 and aspartate 215 each coordinate NAD(+).

This sequence belongs to the zinc-containing alcohol dehydrogenase family. Zn(2+) is required as a cofactor.

It carries out the reaction erythritol + NAD(+) = D-erythrulose + NADH + H(+). The catalysed reaction is L-threitol + NAD(+) = L-erythrulose + NADH + H(+). It participates in carbohydrate metabolism; erythritol degradation. Its pathway is carbohydrate metabolism; L-threitol degradation. Its function is as follows. Catalyzes the NAD-dependent reversible oxidation of erythritol and L-threitol. Involved in the degradation pathways of erythritol and L-threitol, that allow M.smegmatis to grow on these compounds as the sole carbon source. The polypeptide is Erythritol/L-threitol dehydrogenase (Mycolicibacterium smegmatis (strain ATCC 700084 / mc(2)155) (Mycobacterium smegmatis)).